The chain runs to 102 residues: Large ribosomal subunit protein uL24 (102 aa).

Belongs to the universal ribosomal protein uL24 family. As to quaternary structure, part of the 50S ribosomal subunit.

One of two assembly initiator proteins, it binds directly to the 5'-end of the 23S rRNA, where it nucleates assembly of the 50S subunit. Functionally, one of the proteins that surrounds the polypeptide exit tunnel on the outside of the subunit. This chain is Large ribosomal subunit protein uL24, found in Paraburkholderia xenovorans (strain LB400).